The following is a 419-amino-acid chain: [Butirosin acyl-carrier protein]--L-glutamate ligase (419 aa).

The ATP-grasp domain occupies 144–345 (RRLMERNGFN…FVESRVLVFN (202 aa)). ATP is bound at residue 174–231 (ISAGFSKCVLKVPYGSSGKGLKVIDNERNFRFLLNYIQNRQTNVDLLLEGWHPHRLSL). Mg(2+) contacts are provided by Asp298, Glu312, and Asn314. Mn(2+)-binding residues include Asp298, Glu312, and Asn314.

Monomer. Mg(2+) is required as a cofactor. It depends on Mn(2+) as a cofactor.

The enzyme catalyses holo-[BtrI ACP] + L-glutamate + ATP = gamma-L-glutamyl-[BtrI ACP] + ADP + phosphate. The catalysed reaction is 4-aminobutanoyl-[BtrI ACP] + L-glutamate + ATP = 4-(gamma-L-glutamylamino)butanoyl-[BtrI ACP] + ADP + phosphate + H(+). It participates in antibiotic biosynthesis; butirosin biosynthesis. Its function is as follows. ATP-dependent ligase that catalyzes 2 steps in the biosynthesis of the side chain of the aminoglycoside antibiotics in the biosynthetic pathway of butirosin. Mediates the addition of one molecule of L-glutamate to a dedicated acyl-carrier protein. Following decarboxylation of the product by BtrK, adds a second L-glutamate molecule. The chain is [Butirosin acyl-carrier protein]--L-glutamate ligase (btrJ) from Niallia circulans (Bacillus circulans).